A 672-amino-acid polypeptide reads, in one-letter code: Forkhead box protein O3 (672 aa).

Disordered stretches follow at residues 1–85 (MAEA…GVSS) and 110–152 (GPAS…CSSR). Phosphoserine is present on S30. The residue at position 32 (T32) is a Phosphothreonine. K46 carries the N6-methyllysine modification. Positions 57–68 (IPEEDDDEDDED) are enriched in acidic residues. Residues 80–108 (GGGVSSTLGSGLLLEDSAMLLAPGGQDLG) form a required for mitochondrial import region. Over residues 110-129 (GPASAAGALSGGTPTQLQPQ) the composition is skewed to low complexity. K148 bears the N6-methyllysine mark. The fork-head DNA-binding region spans 156–250 (WGNLSYADLI…KSGKAPRRRA (95 aa)). Residue T178 is modified to Phosphothreonine. 2 positions are modified to phosphoserine: S208 and S214. Residue K229 is modified to N6-methyllysine. The interval 230–301 (SSWWIINPDG…GSPTSRSSDE (72 aa)) is disordered. At K241 the chain carries N6-acetyllysine. The short motif at 241–258 (KSGKAPRRRAVSMDNSNK) is the Nuclear localization signal element. S252 carries the phosphoserine modification. The span at 260–271 (TKSRGRAAKKKA) shows a compositional bias: basic residues. An N6-methyllysine mark is found at K261 and K270. 2 positions are modified to phosphoserine: S279 and S283. The span at 282 to 297 (DSPSQLSKWPGSPTSR) shows a compositional bias: polar residues. N6-methyllysine is present on K289. S293 carries the post-translational modification Phosphoserine. S298 is subject to Phosphoserine; by CaMK2A. The mediates interaction with CHUK/IKKA and IKBKB/IKKB stretch occupies residues 299–672 (SDELDAWTDF…QASSQSWVPG (374 aa)). S310 is subject to Phosphoserine. Phosphoserine; by SGK1 is present on S314. S398 and S412 each carry phosphoserine; by AMPK. Disordered regions lie at residues 399 to 441 (QPSP…SLNS) and 535 to 583 (HQHQ…QTLS). Composition is skewed to polar residues over residues 409–441 (RGSSFPYTAKSSGLGSPTGSFNSTVFGPSSLNS) and 548–577 (ALSNSVSNMGLSDSSSLGSAKHQQQSPASQ). Residue K418 is modified to N6-methyllysine. S420 carries the post-translational modification Phosphoserine. Phosphoserine; by MAPKAPK5 is present on S550. Position 554 is a phosphoserine; by AMPK and MAPKAPK5 (S554). 2 positions are modified to phosphoserine; by AMPK: S587 and S625. S643 bears the Phosphoserine; by IKKB mark.

In terms of assembly, upon metabolic stress, forms a complex composed of FOXO3, SIRT3 and mitochondrial RNA polymerase POLRMT; the complex is recruited to mtDNA in a SIRT3-dependent manner. Also forms a complex composed of FOXO3, SIRT3, TFAM and POLRMT. Interacts with SIRT2; the interaction occurs independently of SIRT2 deacetylase activity. Interacts with YWHAB/14-3-3-beta and YWHAZ/14-3-3-zeta, which are required for cytosolic sequestration. Upon oxidative stress, interacts with STK4/MST1, which disrupts interaction with YWHAB/14-3-3-beta and leads to nuclear translocation. Interacts with PIM1. Interacts with DDIT3/CHOP. Interacts (deacetylated form) with SKP2. Interacts with CHUK and IKBKB. Interacts with CAMK2A, CAMK2B and calcineurin A. Interacts with NUPR1; this interaction represses FOXO3 transactivation. In terms of processing, deacetylation by SIRT1 or SIRT2 stimulates interaction of FOXO3 with SKP2 and facilitates SCF(SKP2)-mediated FOXO3 ubiquitination and proteasomal degradation. Deacetylation by SIRT2 stimulates FOXO3-mediated transcriptional activity in response to oxidative stress. Deacetylated by SIRT3. Deacetylation by SIRT3 stimulates FOXO3-mediated mtDNA transcriptional activity in response to metabolic stress. In the presence of survival factors such as IGF1, phosphorylated on Thr-32 and Ser-252 by AKT1/PKB. This phosphorylated form then interacts with 14-3-3 proteins and is retained in the cytoplasm. Survival factor withdrawal induces dephosphorylation and promotes translocation to the nucleus where the dephosphorylated protein induces transcription of target genes and triggers apoptosis. Although AKT1/PKB doesn't appear to phosphorylate Ser-314 directly, it may activate other kinases that trigger phosphorylation at this residue. Phosphorylated by STK4/MST1 on Ser-208 upon oxidative stress, which leads to dissociation from YWHAB/14-3-3-beta and nuclear translocation. Phosphorylated by PIM1. Phosphorylation by AMPK leads to the activation of transcriptional activity without affecting subcellular localization. Phosphorylated by AMPK on Ser-30 in response to metabolic stress which mediates FOXO3 mitochondrial translocation. Phosphorylation by MAPKAPK5 promotes nuclear localization and DNA-binding, leading to induction of miR-34b and miR-34c expression, 2 post-transcriptional regulators of MYC that bind to the 3'UTR of MYC transcript and prevent its translation. Phosphorylated by CHUK/IKKA and IKBKB/IKKB. TNF-induced inactivation of FOXO3 requires its phosphorylation at Ser-643 by IKBKB/IKKB which promotes FOXO3 retention in the cytoplasm, polyubiquitination and ubiquitin-mediated proteasomal degradation. May be dephosphorylated by calcineurin A on Ser-298 which abolishes FOXO3 transcriptional activity. Phosphorylation at Ser-252 promotes its degradation by the proteasome. Dephosphorylation at Ser-252 by protein phosphatase 2A (PPP2CA) promotes its stabilization; interaction with PPP2CA is enhanced by AMBRA1. Post-translationally, heavily methylated by SET9 which decreases stability, while moderately increasing transcriptional activity. The main methylation site is Lys-270. Methylation doesn't affect subcellular location. In terms of processing, polyubiquitinated. Ubiquitinated by a SCF complex containing SKP2, leading to proteasomal degradation. The N-terminus is cleaved following import into the mitochondrion. Expressed in white and brown adipose tissues (at protein level). Expressed in liver, kidney, lung and colon (at protein level). Expressed in skeletal muscles (at protein level).

Its subcellular location is the cytoplasm. The protein localises to the cytosol. The protein resides in the nucleus. It is found in the mitochondrion matrix. It localises to the mitochondrion outer membrane. Transcriptional activator that recognizes and binds to the DNA sequence 5'-[AG]TAAA[TC]A-3' and regulates different processes, such as apoptosis and autophagy. Acts as a positive regulator of autophagy in skeletal muscle: in starved cells, enters the nucleus following dephosphorylation and binds the promoters of autophagy genes, such as GABARAP1L, MAP1LC3B and ATG12, thereby activating their expression, resulting in proteolysis of skeletal muscle proteins. Triggers apoptosis in the absence of survival factors, including neuronal cell death upon oxidative stress. Participates in post-transcriptional regulation of MYC: following phosphorylation by MAPKAPK5, promotes induction of miR-34b and miR-34c expression, 2 post-transcriptional regulators of MYC that bind to the 3'UTR of MYC transcript and prevent its translation. In response to metabolic stress, translocates into the mitochondria where it promotes mtDNA transcription. Also acts as a key regulator of chondrogenic commitment of skeletal progenitor cells in response to lipid availability: when lipids levels are low, translocates to the nucleus and promotes expression of SOX9, which induces chondrogenic commitment and suppresses fatty acid oxidation. Also acts as a key regulator of regulatory T-cells (Treg) differentiation by activating expression of FOXP3. The polypeptide is Forkhead box protein O3 (Mus musculus (Mouse)).